Here is a 207-residue protein sequence, read N- to C-terminus: Small ribosomal subunit protein uS4 (207 aa).

Residues 26-47 (AINNKNYKPGQQGNSSSISKPS) form a disordered region. The segment covering 28–39 (NNKNYKPGQQGN) has biased composition (polar residues). Positions 95-158 (RRLDAVVYRL…KQIPIVIGAI (64 aa)) constitute an S4 RNA-binding domain.

The protein belongs to the universal ribosomal protein uS4 family. As to quaternary structure, part of the 30S ribosomal subunit. Contacts protein S5. The interaction surface between S4 and S5 is involved in control of translational fidelity.

Functionally, one of the primary rRNA binding proteins, it binds directly to 16S rRNA where it nucleates assembly of the body of the 30S subunit. In terms of biological role, with S5 and S12 plays an important role in translational accuracy. The chain is Small ribosomal subunit protein uS4 from Orientia tsutsugamushi (strain Boryong) (Rickettsia tsutsugamushi).